The sequence spans 134 residues: Major capsid protein (134 aa).

Homodimer.

Its subcellular location is the virion. In terms of biological role, self-assembles to form a helical, filamentous nucleocapsid. The capsid proteins wrap around the DNA and maintain it in an A-form by non-specific desolvation and specific coordination of the DNA phosphate groups by positively charged residues. This certainly protects the viral DNA under conditions such as the extreme desiccation of its host. This Saccharolobus islandicus (Sulfolobus islandicus) protein is Major capsid protein.